A 312-amino-acid chain; its full sequence is Olfactory receptor 6C70 (312 aa).

Over 1–22 (MKNHTRQIEFILLGLTDNSQLQ) the chain is Extracellular. Asn-3 is a glycosylation site (N-linked (GlcNAc...) asparagine). The helical transmembrane segment at 23–43 (IVIFLFLLLNCVLSMIGNFTI) threads the bilayer. At 44 to 63 (IALILLDSQLKTPMYFFLRN) the chain is on the cytoplasmic side. Residues 64-84 (FSFLEISFTTACIPRFLITIV) traverse the membrane as a helical segment. The Extracellular portion of the chain corresponds to 85–95 (TREKTISCNGC). Cys-95 and Cys-177 are joined by a disulfide. Residues 96 to 116 (ISQLFFYIFLGVTEFFLLAAL) traverse the membrane as a helical segment. Residues 117-141 (SYDRYVAICKPLRYMSIMSNKVCYQ) are Cytoplasmic-facing. The chain crosses the membrane as a helical span at residues 142–162 (LVFSSWVTGFLIIFTPLILGL). Residues 163–194 (NLDFCASNIIDHFICDISLILQLSCSDTHLLE) are Extracellular-facing. The chain crosses the membrane as a helical span at residues 195–215 (LIAFLLAVMTLIVTLFLVILS). The Cytoplasmic segment spans residues 216–237 (YSYIIKTILKFPSAQQKKKAFS). A helical transmembrane segment spans residues 238-258 (TCSSHMIVVSITYGSCMFIYI). Topologically, residues 259–272 (KPSANERVALSKGV) are extracellular. The helical transmembrane segment at 273-290 (TVLNTSVAPLLNPFIYTL) threads the bilayer. Residues 291-312 (RNQQVKQAFKAVFRKIFSASDK) are Cytoplasmic-facing.

Belongs to the G-protein coupled receptor 1 family.

The protein localises to the cell membrane. Its function is as follows. Odorant receptor. The protein is Olfactory receptor 6C70 (OR6C70) of Homo sapiens (Human).